Consider the following 130-residue polypeptide: Small ribosomal subunit protein uS9 (130 aa).

The protein belongs to the universal ribosomal protein uS9 family.

This Burkholderia cenocepacia (strain HI2424) protein is Small ribosomal subunit protein uS9.